A 321-amino-acid polypeptide reads, in one-letter code: Transaldolase (321 aa).

The active-site Schiff-base intermediate with substrate is the lysine 132.

It belongs to the transaldolase family. Type 1 subfamily. In terms of assembly, homodimer.

Its subcellular location is the cytoplasm. It carries out the reaction D-sedoheptulose 7-phosphate + D-glyceraldehyde 3-phosphate = D-erythrose 4-phosphate + beta-D-fructose 6-phosphate. The protein operates within carbohydrate degradation; pentose phosphate pathway; D-glyceraldehyde 3-phosphate and beta-D-fructose 6-phosphate from D-ribose 5-phosphate and D-xylulose 5-phosphate (non-oxidative stage): step 2/3. In terms of biological role, transaldolase is important for the balance of metabolites in the pentose-phosphate pathway. The sequence is that of Transaldolase from Agrobacterium fabrum (strain C58 / ATCC 33970) (Agrobacterium tumefaciens (strain C58)).